A 121-amino-acid polypeptide reads, in one-letter code: Alpha-endosulfine (121 aa).

The tract at residues 1–53 (MSQKQEEENPAEETGEEKQDTQEKEGILPERAEEAKLKAKYPSLGQKPGGSDF) is disordered. Ser-2 bears the N-acetylserine mark. Ser-2 carries the phosphoserine modification. Over residues 16-37 (EEKQDTQEKEGILPERAEEAKL) the composition is skewed to basic and acidic residues. Position 21 is a phosphothreonine (Thr-21). Ser-43 is subject to Phosphoserine. Ser-67 bears the Phosphoserine; by GWL mark. The interval 79-121 (NKQLPSAGPDKNLVTGDHIPTPQDLPQRKSSLVTSKLAGGQVE) is disordered. Residue Ser-109 is modified to Phosphoserine; by PKA.

It belongs to the endosulfine family. Interacts (when phosphorylated at Ser-67) with PPP2R2D. Interacts with ABCC8. Interacts with SNCA; interaction is disrupted when phosphorylated at Ser-109. In terms of processing, phosphorylation at Ser-67 by GWL during mitosis is essential for interaction with PPP2R2D (PR55-delta) and subsequent inactivation of PP2A. Phosphorylated by PKA. Widely expressed with high levels in skeletal muscle and brain and lower levels in the pancreas.

Its subcellular location is the cytoplasm. Functionally, protein phosphatase inhibitor that specifically inhibits protein phosphatase 2A (PP2A) during mitosis. When phosphorylated at Ser-67 during mitosis, specifically interacts with PPP2R2D (PR55-delta) and inhibits its activity, leading to inactivation of PP2A, an essential condition to keep cyclin-B1-CDK1 activity high during M phase. Also acts as a stimulator of insulin secretion by interacting with sulfonylurea receptor (ABCC8), thereby preventing sulfonylurea from binding to its receptor and reducing K(ATP) channel currents. The polypeptide is Alpha-endosulfine (ENSA) (Homo sapiens (Human)).